We begin with the raw amino-acid sequence, 142 residues long: Non-specific lipid transfer protein GPI-anchored 34 (142 aa).

A signal peptide spans 1 to 22 (MAVAVTAVLFLAVVIAPQWTET). Positions 21 to 43 (ETKKPPRPSDTSDTSGTSGRDRR) are disordered. Over residues 29–38 (SDTSDTSGTS) the composition is skewed to low complexity. Intrachain disulfides connect C46–C85, C57–C69, C70–C106, and C83–C114. Residue N120 is the site of GPI-anchor amidated asparagine attachment. The propeptide at 121–142 (GGATKKIVASMGLFGVVASLFF) is removed in mature form.

Belongs to the plant LTP family.

It localises to the cell membrane. Its function is as follows. Probable lipid transfer protein. This Arabidopsis thaliana (Mouse-ear cress) protein is Non-specific lipid transfer protein GPI-anchored 34.